A 76-amino-acid chain; its full sequence is Protein CYSTEINE-RICH TRANSMEMBRANE MODULE 11 (76 aa).

Residues 19 to 45 (GPPPPVGVPPQYYPPPPPPPPPPPPPR) form a disordered region. Residues 47–63 (VGFLEGLLAALCCCCLV) form a helical membrane-spanning segment.

Belongs to the CYSTM1 family. Heterodimers. Interacts with CYSTM6, CYSTM7 and WIH1/CYSTM13. Mostly expressed in stems, siliques, leaves and flowers and, to a lower extent, in roots.

It is found in the cell membrane. It localises to the cytoplasm. Involved in resistance to abiotic stress. The polypeptide is Protein CYSTEINE-RICH TRANSMEMBRANE MODULE 11 (Arabidopsis thaliana (Mouse-ear cress)).